Consider the following 856-residue polypeptide: MDNAAIASQSNTPPSNGRSSARFVTPISVHSSPISAEVIEPSSPFSPPSPSTLLTSLSKSPSHKISNLQMDGAKTTCLEVIQNSSLVVDSPKRQDKSITGSKAKPASTMRHGQRTASHKMATQTEIQTVDGDRLIVSPKTRKKKAATAKRTRKQDGVAERRLHGHVSKVKSPGDLKLDAKIPPSKPCDNKAPSVGDNTDNELERQTGGLQLEKATKRRLDWTPTKEGPIPMVDLAEVHSSSCGKSVIRTHSAGTLLSNYGFSGVVNTSLAPMPETCDNGPTTKRLMELQNFYSASGIQTPTESRPATNDSQSISSKQQRVKVKKPQKAKLTTLTSYVTAKYSVVDQTADLDRIETVNSGKNKKMGVTKRTSGTERANAARGKSDTLKNGNGPPVFKVVPPLEAFKSFDGQELLFGTSSQLEHGHSEDQDEEIQHTADSINKSNVVPRPAVSKGLGSSLFRLSSSKNLWSASSRDLTGAVLQVDEIDLSERSIEVSTPAAKYKRKTGIRDLSGQNVIDVEKDTRTLAANIDTRELDNMNEPSLAEDDLVYRENLESTNAKLNSQTPANISEAMLERPPPDKPIFGGFTTSELAKQVAAYGFKPIKSRDKMISLLEKCWENQSKSSKLEPKPNQRNHKSQGDDLAERQLLGLKPRSDSISFVITRSPKKRLAKTSVKSQEPKSFSLSNEGPRITSKLPMKRFVSPCAILIDDDQSSDSVGEALPLSPSHSSNGNGTLHHPQDCDEIHAPTTQMAIRSAKSSISVSSTTNLPSLSSQITKAVQSQPRIRAFKGLKQPTWYEKILMYDPIQLEDLAAWLNTGGFGLIGEDREVGAGVVREWCESKGICCVWKKQASAKSH.

The span at 1-19 (MDNAAIASQSNTPPSNGRS) shows a compositional bias: polar residues. Disordered stretches follow at residues 1 to 24 (MDNA…ARFV), 38 to 65 (VIEP…SHKI), 88 to 121 (VDSP…HKMA), 139 to 202 (KTRK…DNEL), 296 to 326 (GIQT…KKPQ), 362 to 392 (KKMG…GNGP), 621 to 640 (SKSS…SQGD), 668 to 689 (RLAK…NEGP), and 715 to 742 (DSVG…QDCD). Low complexity predominate over residues 51 to 60 (STLLTSLSKS). The segment covering 139-152 (KTRKKKAATAKRTR) has biased composition (basic residues). Positions 296 to 309 (GIQTPTESRPATND) are enriched in polar residues. Polar residues predominate over residues 673–686 (SVKSQEPKSFSLSN).

The protein belongs to the SLX4 family. Forms a heterodimer with SLX1. Phosphorylated in response to DNA damage.

It is found in the nucleus. Its function is as follows. Regulatory subunit of the SLX1-SLX4 structure-specific endonuclease that resolves DNA secondary structures generated during DNA repair and recombination. Has endonuclease activity towards branched DNA substrates, introducing single-strand cuts in duplex DNA close to junctions with ss-DNA. The chain is Structure-specific endonuclease subunit SLX4 from Blastomyces gilchristii (strain SLH14081) (Blastomyces dermatitidis).